A 310-amino-acid polypeptide reads, in one-letter code: tRNA-cytidine(32) 2-sulfurtransferase (310 aa).

The short motif at 47–52 is the PP-loop motif element; that stretch reads SGGKDS. [4Fe-4S] cluster is bound by residues Cys122, Cys125, and Cys213.

Belongs to the TtcA family. As to quaternary structure, homodimer. It depends on Mg(2+) as a cofactor. The cofactor is [4Fe-4S] cluster.

Its subcellular location is the cytoplasm. It catalyses the reaction cytidine(32) in tRNA + S-sulfanyl-L-cysteinyl-[cysteine desulfurase] + AH2 + ATP = 2-thiocytidine(32) in tRNA + L-cysteinyl-[cysteine desulfurase] + A + AMP + diphosphate + H(+). The protein operates within tRNA modification. Catalyzes the ATP-dependent 2-thiolation of cytidine in position 32 of tRNA, to form 2-thiocytidine (s(2)C32). The sulfur atoms are provided by the cysteine/cysteine desulfurase (IscS) system. In Haemophilus influenzae (strain PittEE), this protein is tRNA-cytidine(32) 2-sulfurtransferase.